The chain runs to 278 residues: MVTGVASAMAERLKEDGNNCFKKERFGAAIDAYTEAIALSPNVPAYWTNRALCHMKRKDWTKVEEDCRKAIQLVHNSVKAHYMLGLALLQKKEFTNGVKELQRALDLGRCSNPTGYMVEEIWEELSKAKYMEWELVSAMRSWELNSLKETCEAALNQQRALDMSRTEESSDEAYTAHTERLKALERVFKKAAEEDKPTEVPDYLCCNITLEIFRDPVISPSGVTYERAAILEHLKKVGKFDPITREKIDPANLVPNLAIKEAVAAYLEKHVWAYKMGC.

3 TPR repeats span residues 10–43, 45–77, and 78–111; these read AERL…SPNV, AYWT…VHNS, and VKAH…GRCS. A coiled-coil region spans residues 143–194; it reads ELNSLKETCEAALNQQRALDMSRTEESSDEAYTAHTERLKALERVFKKAAEE. A U-box domain is found at 199–273; that stretch reads EVPDYLCCNI…AAYLEKHVWA (75 aa).

As to quaternary structure, interacts with HSC70-4, PP2AA1, PP2AA3 and PP2A5, as well as with UBC8, UBC9 and UBC10. Also interacts with the chloroplastic proteolytic subunits ClpP4, FtsH1 and FtsH2.

The enzyme catalyses S-ubiquitinyl-[E2 ubiquitin-conjugating enzyme]-L-cysteine + [acceptor protein]-L-lysine = [E2 ubiquitin-conjugating enzyme]-L-cysteine + N(6)-ubiquitinyl-[acceptor protein]-L-lysine.. Its pathway is protein modification; protein ubiquitination. In terms of biological role, has E3 ubiquitin-protein ligase activity and may target misfolded substrates towards proteasomal degradation. Regulates the activity of some serine/threonine-protein phosphatases by E3 ubiquitin-protein ligase activity. Required for responses to biotic and abiotic stresses such as auxin, abscisic acid (ABA), low and high temperature and darkness, probably through the activation of serine/threonine-protein phosphatase and the subsequent modification of the plasma membrane composition. Regulates the chloroplastic Clp proteolytic activity in response to stresses. Ubiquitylates FtsH1, a component of the chloroplast FtsH protease, and affects protein degradation in chloroplasts. Mediates plastid precursor degradation to prevent cytosolic precursor accumulation, together with the molecular chaperone HSC70-4. Mediates ubiquitination of transit peptides and thereby led to their degradation through the ubiquitin-proteasome system. This is E3 ubiquitin-protein ligase CHIP from Arabidopsis thaliana (Mouse-ear cress).